A 362-amino-acid polypeptide reads, in one-letter code: Caveolae-associated protein 4 (362 aa).

The disordered stretch occupies residues 1-24; it reads MEHNGSASNAGKIHQNRLSSVTED. The stretch at 100–120 forms a coiled coil; that stretch reads IKDVKARVEKQQVRVTKVETK. A phosphoserine mark is found at Ser-152, Ser-171, and Ser-172. Composition is skewed to basic and acidic residues over residues 230–255, 275–289, and 305–320; these read RERL…ERFK, KAKD…VDRG, and HEFH…KEVT. 2 disordered regions span residues 230-289 and 305-346; these read RERL…VDRG and HEFH…KPQV. Tyr-324 bears the Phosphotyrosine mark. A Phosphothreonine modification is found at Thr-334. Ser-353 carries the post-translational modification Phosphoserine.

This sequence belongs to the CAVIN family. As to quaternary structure, component of the CAVIN complex composed of CAVIN1, CAVIN2, CAVIN3 and CAVIN4. Interacts with CAVIN1. Interacts with CAVIN2; this augments the transactivation of NPPA. Interacts with CAV3, ADRA1A, ADRA1B, MAPK1 and MAPK3. As to expression, abundantly expressed in cardiac and skeletal muscle (at protein level). Weaker expression in aorta and lung. In heart, expressed in cardiomyocytes and vascular smooth muscle cells but not in other surrounding cells including vascular endothelial cells.

It is found in the cytoplasm. It localises to the myofibril. The protein resides in the sarcomere. The protein localises to the cytosol. Its subcellular location is the membrane. It is found in the caveola. It localises to the cell membrane. The protein resides in the sarcolemma. Modulates the morphology of formed caveolae in cardiomyocytes, but is not required for caveolar formation. Facilitates the recruitment of MAPK1/3 to caveolae within cardiomyocytes and regulates alpha-1 adrenergic receptor-induced hypertrophic responses in cardiomyocytes through MAPK1/3 activation. Contributes to proper membrane localization and stabilization of caveolin-3 (CAV3) in cardiomyocytes. Induces RHOA activation and activates NPPA transcription and myofibrillar organization through the Rho/ROCK signaling pathway. The polypeptide is Caveolae-associated protein 4 (Cavin4) (Mus musculus (Mouse)).